We begin with the raw amino-acid sequence, 123 residues long: Large ribosomal subunit protein bL12 (123 aa).

The interval 96–123 (NVKEGVSKEEAEGLKKSLEEAGATVELK) is disordered. The segment covering 100-114 (GVSKEEAEGLKKSLE) has biased composition (basic and acidic residues).

The protein belongs to the bacterial ribosomal protein bL12 family. As to quaternary structure, homodimer. Part of the ribosomal stalk of the 50S ribosomal subunit. Forms a multimeric L10(L12)X complex, where L10 forms an elongated spine to which 2 to 4 L12 dimers bind in a sequential fashion. Binds GTP-bound translation factors.

In terms of biological role, forms part of the ribosomal stalk which helps the ribosome interact with GTP-bound translation factors. Is thus essential for accurate translation. In Flavobacterium johnsoniae (strain ATCC 17061 / DSM 2064 / JCM 8514 / BCRC 14874 / CCUG 350202 / NBRC 14942 / NCIMB 11054 / UW101) (Cytophaga johnsonae), this protein is Large ribosomal subunit protein bL12.